The sequence spans 36 residues: Photosystem I reaction center subunit VIII (36 aa).

Residues 9-29 form a helical membrane-spanning segment; it reads ILVPLVGLVFPAVTMASLFLY.

The protein belongs to the PsaI family.

The protein localises to the plastid. The protein resides in the chloroplast thylakoid membrane. In terms of biological role, may help in the organization of the PsaL subunit. The chain is Photosystem I reaction center subunit VIII from Staurastrum punctulatum (Green alga).